We begin with the raw amino-acid sequence, 88 residues long: C-C motif chemokine 18 (88 aa).

The signal sequence occupies residues 1–19 (MKGLAAALLVLCTVALCSC). 2 disulfides stabilise this stretch: Cys-29–Cys-53 and Cys-30–Cys-69.

It belongs to the intercrine beta (chemokine CC) family. In terms of processing, the Cys-29/Cys-53 disulfide bond is required for activity.

It is found in the secreted. In terms of biological role, chemotactic factor that attracts lymphocytes but not monocytes or granulocytes. May be involved in B-cell migration into B-cell follicles in lymph nodes. Attracts naive T-lymphocytes toward dendritic cells and activated macrophages in lymph nodes, has chemotactic activity for naive T-cells, CD4+ and CD8+ T-cells and thus may play a role in both humoral and cell-mediated immunity responses. The protein is C-C motif chemokine 18 (CCL18) of Macaca mulatta (Rhesus macaque).